The chain runs to 294 residues: MIPSELEPEFLHIPVLSQAVIQGLNLRPGGHYLDATVGGGGHSRLILEAAPESQVTALDRDQQALQAARSALQPYGERVQFYQSNFADYESGSLRFDGILADLGVSSAQLDQPQRGFSFRADAPLDMRMDQRQSLTAAELVNTASAEELADIFYYYGEERFARRIARRIVQHRPLYTTAQLASLVSRALPSRSQSIHPATRVFQALRIAVNRELESLEQFLERSPHWLVTGGRLAVISFHSLEDRRVKHGLRDHSLLQVLTKKPILPSSEEISANPRARSAKLRLAQRLDALEG.

S-adenosyl-L-methionine-binding positions include 40-42 (GGH), Asp-59, Phe-86, Asp-102, and Gln-109.

The protein belongs to the methyltransferase superfamily. RsmH family.

The protein resides in the cytoplasm. It catalyses the reaction cytidine(1402) in 16S rRNA + S-adenosyl-L-methionine = N(4)-methylcytidine(1402) in 16S rRNA + S-adenosyl-L-homocysteine + H(+). Its function is as follows. Specifically methylates the N4 position of cytidine in position 1402 (C1402) of 16S rRNA. The polypeptide is Ribosomal RNA small subunit methyltransferase H (Cyanothece sp. (strain PCC 7425 / ATCC 29141)).